We begin with the raw amino-acid sequence, 1682 residues long: Cilia- and flagella-associated protein 43 (1682 aa).

WD repeat units lie at residues 168 to 207, 262 to 305, 315 to 354, 358 to 397, 488 to 527, and 697 to 738; these read NPGM…QEHH, PKDD…VTVL, DGAP…YQVK, EFDG…PLDK, LSQS…SFQI, and SHQG…ANIA. The disordered stretch occupies residues 767–790; it reads RESTNEQQEETTESQKHLNSDSSE. Coiled-coil stretches lie at residues 926 to 960 and 1171 to 1223; these read KERT…VEVQ and SEDE…HLKR.

It belongs to the CFAP43 family. In terms of tissue distribution, expressed in testis. Expressed in the lung, brain, oviduct and nasal cavity.

Its subcellular location is the cell projection. The protein localises to the cilium. It is found in the flagellum. The protein resides in the cytoplasm. It localises to the cytoskeleton. Its subcellular location is the flagellum axoneme. The protein localises to the cilium axoneme. Flagellar protein involved in sperm flagellum axoneme organization and function. Involved in the regulation of the beating frequency of motile cilia on the epithelial cells of the respiratory tract. This is Cilia- and flagella-associated protein 43 from Mus musculus (Mouse).